Here is a 901-residue protein sequence, read N- to C-terminus: MSILTRIFGSRNERVLRKLKKQVVKINKMEPAFEALSDDELKAKTQEFRDRLSGGETLQQILPEAFATVREASKRVLGMRHFDVQLIGGMVLTNRCIAEMRTGEGKTLTATLPCYLIALEGKGVHVVTVNDYLARRDAETNRPLFEFLGMSVGVNIPGLSPEEKRAAYAADITYATNSELGFDYLRDNLAHSKEERFQRTLGYALVDEVDSILIDEARTPLIISGQAENSSELYIAVNKLIPSLIKQEKEDTEEYQGEGDFTLDLKSKQAHLTERGQEKVEDWLIAQGLMPEGDSLYSPSRIVLLHHVMAALRAHTLFEKDVDYIVKDGEIVIVDEHTGRTMAGRRWSDGLHQAIEAKEGVDVKSENQTVASISYQNYFRLYERLAGMTGTADTEAFEFQQIYGLETVVIPTNRPMIRDDRTDVMFENEQYKFNAIIEDIKDCVERQQPVLVGTISVEKSEELSKALDKAGIKHNVLNAKFHQQEAEIVAEAGFPSAVTIATNMAGRGTDIILGGNWKAQAAKLENPTQEQIEALKAEWEKNHEIVMKAGGLHIIGTERHESRRIDNQLRGRSGRQGDPGSSRFYLSLEDGLMRIYLNEGKLNLMRKAFTVAGEAMESKMLAKVIASAQAKVEAFHFDGRKNLLEYDDVANDQRHAIYEQRNHLLDNDDISETINAIRHDVFNGVIDQYIPPQSLEEQWDIKGLEERLSQEFGMELPISNWLEEDNNLHEESLRERIVEIAEKEYKEKEALVGEDAMRHFEKGVMLQTLDELWKEHLASMDYLRQGIHLRGYAQKDPKQEYKKESFRMFTEMLDSLKHQVITALTRVRVRTQEEMEEAERARQEMAARINQNNLPVDENSQTTQNSETEDYSDRRIGRNEPCPCGSGKKYKHCHGSRVARQ.

Residues Gln85, 103-107, and Asp510 contribute to the ATP site; that span reads GEGKT. Positions 848–901 are disordered; that stretch reads RINQNNLPVDENSQTTQNSETEDYSDRRIGRNEPCPCGSGKKYKHCHGSRVARQ. Over residues 849–866 the composition is skewed to polar residues; sequence INQNNLPVDENSQTTQNS. 4 residues coordinate Zn(2+): Cys882, Cys884, Cys893, and His894. Basic residues predominate over residues 888 to 901; the sequence is KKYKHCHGSRVARQ.

Belongs to the SecA family. In terms of assembly, monomer and homodimer. Part of the essential Sec protein translocation apparatus which comprises SecA, SecYEG and auxiliary proteins SecDF-YajC and YidC. Forms a complex with SecB. Zn(2+) serves as cofactor.

Its subcellular location is the cell inner membrane. The protein resides in the cytoplasm. It carries out the reaction ATP + H2O + cellular proteinSide 1 = ADP + phosphate + cellular proteinSide 2.. Its function is as follows. Part of the Sec protein translocase complex. Interacts with the SecYEG preprotein conducting channel. Has a central role in coupling the hydrolysis of ATP to the transfer of proteins into and across the cell membrane, serving both as a receptor for the preprotein-SecB complex and as an ATP-driven molecular motor driving the stepwise translocation of polypeptide chains across the membrane. The protein is Protein translocase subunit SecA of Haemophilus influenzae (strain ATCC 51907 / DSM 11121 / KW20 / Rd).